We begin with the raw amino-acid sequence, 254 residues long: 5-keto-D-gluconate 5-reductase (254 aa).

13-37 (LITGSAQGIGFLLATGLGKYGAQII) lines the NADP(+) pocket. Substrate is bound at residue Ser145. Tyr158 functions as the Proton acceptor in the catalytic mechanism.

Belongs to the short-chain dehydrogenases/reductases (SDR) family.

It carries out the reaction D-gluconate + NAD(+) = 5-dehydro-D-gluconate + NADH + H(+). The catalysed reaction is D-gluconate + NADP(+) = 5-dehydro-D-gluconate + NADPH + H(+). It functions in the pathway carbohydrate acid metabolism; L-idonate degradation. Functionally, catalyzes the reduction of 5-keto-D-gluconate to D-gluconate, using either NADH or NADPH. Is likely involved in an L-idonate degradation pathway that allows E.coli to utilize L-idonate as the sole carbon and energy source. Is also able to catalyze the reverse reaction in vitro, but the D-gluconate oxidation by the enzyme can only proceed with NAD. The polypeptide is 5-keto-D-gluconate 5-reductase (Escherichia coli O6:H1 (strain CFT073 / ATCC 700928 / UPEC)).